The chain runs to 186 residues: Ribosome maturation factor RimP (186 aa).

This sequence belongs to the RimP family.

The protein localises to the cytoplasm. Functionally, required for maturation of 30S ribosomal subunits. This is Ribosome maturation factor RimP from Novosphingobium aromaticivorans (strain ATCC 700278 / DSM 12444 / CCUG 56034 / CIP 105152 / NBRC 16084 / F199).